Consider the following 364-residue polypeptide: Cell cycle control protein 50A (364 aa).

The tract at residues 1–28 is disordered; sequence MAMNYSAKDEVDGGPAGPPGGAAKTRRP. Ala-2 bears the N-acetylalanine mark. Residues 2-49 are Cytoplasmic-facing; it reads AMNYSAKDEVDGGPAGPPGGAAKTRRPDNTAFKQQRLPAWQPILTAGT. The helical transmembrane segment at 50-70 threads the bilayer; it reads VLPTFFIIGLIFIPIGIGIFV. Over 71–328 the chain is Exoplasmic loop; it reads TSNNIREIEI…SWMGGKNPFL (258 aa). 3 disulfides stabilise this stretch: Cys-91–Cys-104, Cys-94–Cys-102, and Cys-157–Cys-171. Asn-98 carries an N-linked (GlcNAc...) asparagine glycan. Asn-297 carries an N-linked (GlcNAc...) asparagine glycan. A helical transmembrane segment spans residues 329–349; the sequence is GIAYITIGSISFLLGVVLLVI. The Cytoplasmic segment spans residues 350–364; sequence NHKYRNSSNTADITI.

The protein belongs to the CDC50/LEM3 family. In terms of assembly, component of various P4-ATPase flippase complexes which consists of a catalytic alpha subunit and an accessory beta subunit. Interacts with ATP8A1 to form a flippase complex; this complex forms an intermediate phosphoenzyme. The ATP8A2:TMEM30A flippase complex has been purified, and ATP8B1:TMEM30A and ATP8B2:TMEM30A flippase complexes have been shown to form intermediate phosphoenzymes in vitro. Interacts with alpha subunits ATP8A1, ATP8B1, ATP8B2, ATP8B4, ATP10A, ATP10B, ATP10D, ATP11A, ATP11B and ATP11C. Post-translationally, N-glycosylated. Contains high mannose-type oligosaccharides. In terms of tissue distribution, expressed in photoreceptor cells; detected in retina outer segment (at protein level). Detected in hepatocytes liver sinusoidal endothelial cells and kidney brush border of the proximal tubules (at protein level). Expressed in brain (at protein level).

The protein localises to the membrane. It localises to the cell membrane. The protein resides in the golgi apparatus. Its subcellular location is the cytoplasmic vesicle. It is found in the secretory vesicle membrane. The protein localises to the apical cell membrane. Accessory component of a P4-ATPase flippase complex which catalyzes the hydrolysis of ATP coupled to the transport of aminophospholipids from the outer to the inner leaflet of various membranes and ensures the maintenance of asymmetric distribution of phospholipids. Phospholipid translocation also seems to be implicated in vesicle formation and in uptake of lipid signaling molecules. The beta subunit may assist in binding of the phospholipid substrate. Required for the proper folding, assembly and ER to Golgi exit of the ATP8A2:TMEM30A flippase complex. ATP8A2:TMEM30A may be involved in regulation of neurite outgrowth, and, reconstituted to liposomes, predomiminantly transports phosphatidylserine (PS) and to a lesser extent phosphatidylethanolamine (PE). The ATP8A1:TMEM30A flippase complex seems to play a role in regulation of cell migration probably involving flippase-mediated translocation of phosphatidylethanolamine (PE) at the plasma membrane. Required for the formation of the ATP8A2, ATP8B1 and ATP8B2 P-type ATPAse intermediate phosphoenzymes. Involved in uptake of platelet-activating factor (PAF). Can also mediate the export of alpha subunits ATP8A1, ATP8B1, ATP8B2, ATP8B4, ATP10A, ATP10B, ATP10D, ATP11A, ATP11B and ATP11C from the ER to other membrane localizations. This chain is Cell cycle control protein 50A, found in Mus musculus (Mouse).